A 37-amino-acid polypeptide reads, in one-letter code: Large ribosomal subunit protein bL36 (37 aa).

Belongs to the bacterial ribosomal protein bL36 family.

This Treponema denticola (strain ATCC 35405 / DSM 14222 / CIP 103919 / JCM 8153 / KCTC 15104) protein is Large ribosomal subunit protein bL36.